The primary structure comprises 122 residues: Large ribosomal subunit protein uL14 (122 aa).

The protein belongs to the universal ribosomal protein uL14 family. In terms of assembly, part of the 50S ribosomal subunit. Forms a cluster with proteins L3 and L19. In the 70S ribosome, L14 and L19 interact and together make contacts with the 16S rRNA in bridges B5 and B8.

Binds to 23S rRNA. Forms part of two intersubunit bridges in the 70S ribosome. In Gemmatimonas aurantiaca (strain DSM 14586 / JCM 11422 / NBRC 100505 / T-27), this protein is Large ribosomal subunit protein uL14.